The chain runs to 342 residues: Sorting nexin-15 (342 aa).

The region spanning 1–130 is the PX domain; that stretch reads MSRQAKDDFL…EFFRGGEVTR (130 aa). Arg-51, Ser-53, Arg-87, and Arg-96 together coordinate a 1,2-diacyl-sn-glycero-3-phospho-(1D-myo-inositol-3-phosphate). Arg-105 is subject to Omega-N-methylarginine. 2 positions are modified to phosphoserine: Ser-201 and Ser-227. Positions 245–267 are disordered; the sequence is DQEPWEPGGQEEEEDGEGGPTPA. The MIT domain maps to 265–342; that stretch reads TPAYLSQATE…LRLHLSQLPP (78 aa).

Belongs to the sorting nexin family. Homodimer. Interacts with SNX1, SNX2 and SNX4. Widely expressed.

Its subcellular location is the cytoplasm. The protein resides in the membrane. It localises to the cytoplasmic vesicle membrane. Its function is as follows. May be involved in several stages of intracellular trafficking. Overexpression of SNX15 disrupts the normal trafficking of proteins from the plasma membrane to recycling endosomes or the TGN. In Homo sapiens (Human), this protein is Sorting nexin-15 (SNX15).